We begin with the raw amino-acid sequence, 946 residues long: Inter-alpha-trypsin inhibitor heavy chain H2 (946 aa).

A signal peptide spans 1-18 (MQRPVCLLIWLFLLEAQA). Residues 19–54 (FEIPINGNSEFAEYSDLVELAPDKLPFVQENGRHQR) constitute a propeptide that is removed on maturation. In terms of domain architecture, VIT spans 56–185 (LPEESGEETD…KVQFELHYQE (130 aa)). Serine 60 bears the Phosphoserine mark. Residues asparagine 118 and asparagine 263 are each glycosylated (N-linked (GlcNAc...) asparagine). A 4-carboxyglutamate mark is found at glutamate 282 and glutamate 283. A VWFA domain is found at 308–468 (PKNILFVIDV…YDFLKRLSNE (161 aa)). Asparagine 445 is a glycosylation site (N-linked (GlcNAc...) asparagine). Serine 466 carries the post-translational modification Phosphoserine. The residue at position 702 (aspartate 702) is an Aspartate 1-(chondroitin 4-sulfate)-ester. Residues 703–946 (PHFIIYLPKS…PQLYSFLKRP (244 aa)) constitute a propeptide that is removed on maturation. At serine 886 the chain carries Phosphoserine.

This sequence belongs to the ITIH family. As to quaternary structure, I-alpha-I plasma protease inhibitors are assembled from one or two heavy chains (HC) and one light chain, bikunin. Inter-alpha-inhibitor (I-alpha-I) is composed of ITIH1/HC1, ITIH2/HC2 and bikunin. Post-translationally, heavy chains are linked to bikunin via chondroitin 4-sulfate esterified to the alpha-carboxyl of the C-terminal aspartate after propeptide cleavage. Phosphorylated by FAM20C in the extracellular medium. As to expression, expressed in both liver and brain.

Its subcellular location is the secreted. In terms of biological role, may act as a carrier of hyaluronan in serum or as a binding protein between hyaluronan and other matrix protein, including those on cell surfaces in tissues to regulate the localization, synthesis and degradation of hyaluronan which are essential to cells undergoing biological processes. The chain is Inter-alpha-trypsin inhibitor heavy chain H2 (Itih2) from Mus musculus (Mouse).